The following is a 244-amino-acid chain: UPF0280 protein Mhun_0136 (244 aa).

It belongs to the UPF0280 family.

The protein is UPF0280 protein Mhun_0136 of Methanospirillum hungatei JF-1 (strain ATCC 27890 / DSM 864 / NBRC 100397 / JF-1).